The primary structure comprises 484 residues: Synaptic vesicle membrane protein VAT-1 homolog (484 aa).

Composition is skewed to low complexity over residues 1–13 (MSGE…QQNA) and 40–61 (SAST…PAAE). Disordered stretches follow at residues 1-65 (MSGE…KAPE) and 402-484 (IGKI…KEEN). Residues 411–484 (PMKEEEKKEE…KKEEVKKEEN (74 aa)) are compositionally biased toward basic and acidic residues.

The protein belongs to the zinc-containing alcohol dehydrogenase family. Quinone oxidoreductase subfamily.

This is Synaptic vesicle membrane protein VAT-1 homolog from Danio rerio (Zebrafish).